A 466-amino-acid chain; its full sequence is Ribulose bisphosphate carboxylase large chain (466 aa).

Position 5 is an N6,N6,N6-trimethyllysine (Lys5). Residues Asn114 and Thr164 each coordinate substrate. Lys166 acts as the Proton acceptor in catalysis. Lys168 contacts substrate. Residues Lys192, Asp194, and Glu195 each coordinate Mg(2+). The residue at position 192 (Lys192) is an N6-carboxylysine. The Proton acceptor role is filled by His285. Substrate contacts are provided by Arg286, His318, and Ser370.

Belongs to the RuBisCO large chain family. Type I subfamily. As to quaternary structure, heterohexadecamer of 8 large chains and 8 small chains; disulfide-linked. The disulfide link is formed within the large subunit homodimers. The cofactor is Mg(2+). The disulfide bond which can form in the large chain dimeric partners within the hexadecamer appears to be associated with oxidative stress and protein turnover.

The protein localises to the plastid. Its subcellular location is the chloroplast. The catalysed reaction is 2 (2R)-3-phosphoglycerate + 2 H(+) = D-ribulose 1,5-bisphosphate + CO2 + H2O. It catalyses the reaction D-ribulose 1,5-bisphosphate + O2 = 2-phosphoglycolate + (2R)-3-phosphoglycerate + 2 H(+). RuBisCO catalyzes two reactions: the carboxylation of D-ribulose 1,5-bisphosphate, the primary event in carbon dioxide fixation, as well as the oxidative fragmentation of the pentose substrate in the photorespiration process. Both reactions occur simultaneously and in competition at the same active site. In Vitis aestivalis (Grape), this protein is Ribulose bisphosphate carboxylase large chain.